Here is a 359-residue protein sequence, read N- to C-terminus: MSMSGSKKDVESEKQKALDAAISQIERAFGRGAIMKLKQHPAEKMDSVSTGSIALDAALGIGGLPKGRIVEIFGPESSGKTTLALHVIAEAQKQGGNCAFIDAEHALDTVYARKLGVNVGDLIVSQPDTGEQALHIVEYLVCSGAIDVIVVDSVAALTPRAEIEGDMGDQHMGLQARLLSHALRKLTSVVSKANCILVFINQIRIKIGVIYGNPEVTTGGSALKFYTSIRLDIRKVSAIKDKDNVIGNQTRVKVVKNKVAPPFKQAEFDIVYNEGISKLGEIVDMGVKFGFVEKSGAHYSYGAVKLGQGRENAKGYLKSNPDVANELEQKIRACLAESMHNSDLFAVDERTDVLEEEVF.

74-81 contacts ATP; it reads GPESSGKT.

The protein belongs to the RecA family.

It is found in the cytoplasm. Can catalyze the hydrolysis of ATP in the presence of single-stranded DNA, the ATP-dependent uptake of single-stranded DNA by duplex DNA, and the ATP-dependent hybridization of homologous single-stranded DNAs. It interacts with LexA causing its activation and leading to its autocatalytic cleavage. The chain is Protein RecA from Anaplasma marginale (strain St. Maries).